The following is a 661-amino-acid chain: Heme transporter BhuA (661 aa).

Residues 1 to 23 (MKFTRTLVLVSTSLLATVATSQA) form the signal peptide. The region spanning 48-159 (KDNIEATGGT…AAGAIRYETV (112 aa)) is the TBDR plug domain. In terms of domain architecture, TBDR beta-barrel spans 170–661 (TFGARIIGSY…TFTFQTAFKF (492 aa)).

Belongs to the TonB-dependent receptor family.

The protein localises to the cell outer membrane. In terms of biological role, heme transporter playing an important role in stationary-phase iron acquisition and required for maintenance of chronic infection in mice. This is Heme transporter BhuA (bhuA) from Brucella abortus (strain 2308).